Consider the following 430-residue polypeptide: Enolase (430 aa).

Position 163 (Q163) interacts with (2R)-2-phosphoglycerate. E205 functions as the Proton donor in the catalytic mechanism. The Mg(2+) site is built by D242, E285, and D312. Residues K337, R366, S367, and K388 each coordinate (2R)-2-phosphoglycerate. The active-site Proton acceptor is K337.

Belongs to the enolase family. Mg(2+) is required as a cofactor.

Its subcellular location is the cytoplasm. The protein localises to the secreted. The protein resides in the cell surface. It catalyses the reaction (2R)-2-phosphoglycerate = phosphoenolpyruvate + H2O. It participates in carbohydrate degradation; glycolysis; pyruvate from D-glyceraldehyde 3-phosphate: step 4/5. Functionally, catalyzes the reversible conversion of 2-phosphoglycerate (2-PG) into phosphoenolpyruvate (PEP). It is essential for the degradation of carbohydrates via glycolysis. This Rubrobacter xylanophilus (strain DSM 9941 / JCM 11954 / NBRC 16129 / PRD-1) protein is Enolase.